The primary structure comprises 685 residues: Phenoloxidase subunit 1 (685 aa).

His209, His213, and His239 together coordinate Cu cation. Glu351 acts as the Proton acceptor in catalysis. 3 residues coordinate Cu cation: His366, His370, and His406. Cystine bridges form between Cys580–Cys622 and Cys582–Cys629.

Heterodimer. Forms a complex with an interleukin 1-like protein as a consequence of a host defense response. Cu(2+) is required as a cofactor. The N-terminus is blocked. As to expression, synthesized by oenocytoids, a type of hemocyte, and released into the hemolymph plasma.

The protein resides in the secreted. It catalyses the reaction 2 L-dopa + O2 = 2 L-dopaquinone + 2 H2O. It carries out the reaction L-tyrosine + O2 = L-dopaquinone + H2O. Its activity is regulated as follows. Activated by immulectin and lipopolysaccharide. Its function is as follows. This is a copper-containing oxidase that functions in the formation of pigments such as melanins and other polyphenolic compounds. Catalyzes the rate-limiting conversions of tyrosine to DOPA, DOPA to DOPA-quinone and possibly 5,6 dihydroxyindole to indole-5'6 quinone. Binds to the surface of hemocytes and is involved in hemocyte melanization. The sequence is that of Phenoloxidase subunit 1 from Manduca sexta (Tobacco hawkmoth).